We begin with the raw amino-acid sequence, 866 residues long: Probable beta-glucosidase F (866 aa).

Positions 1-20 (MAAFPAYLALLSYLVPGALS) are cleaved as a signal peptide. N-linked (GlcNAc...) asparagine glycans are attached at residues asparagine 65, asparagine 73, and asparagine 257. Residue aspartate 285 is part of the active site. Residues asparagine 328, asparagine 360, asparagine 395, asparagine 421, asparagine 474, asparagine 659, asparagine 664, and asparagine 724 are each glycosylated (N-linked (GlcNAc...) asparagine). A disordered region spans residues 725–748 (SSKTYPYPDGYTTEPKPAPRAGGA).

It belongs to the glycosyl hydrolase 3 family.

Its subcellular location is the secreted. It carries out the reaction Hydrolysis of terminal, non-reducing beta-D-glucosyl residues with release of beta-D-glucose.. The protein operates within glycan metabolism; cellulose degradation. Functionally, beta-glucosidases are one of a number of cellulolytic enzymes involved in the degradation of cellulosic biomass. Catalyzes the last step releasing glucose from the inhibitory cellobiose. The chain is Probable beta-glucosidase F (bglF) from Aspergillus flavus (strain ATCC 200026 / FGSC A1120 / IAM 13836 / NRRL 3357 / JCM 12722 / SRRC 167).